The primary structure comprises 262 residues: Hemin import ATP-binding protein HmuV (262 aa).

One can recognise an ABC transporter domain in the interval L3–E244. Residue G35–S42 participates in ATP binding.

This sequence belongs to the ABC transporter superfamily. Heme (hemin) importer (TC 3.A.1.14.5) family. In terms of assembly, the complex is composed of two ATP-binding proteins (HmuV), two transmembrane proteins (HmuU) and a solute-binding protein (HmuT).

The protein resides in the cell inner membrane. Functionally, part of the ABC transporter complex HmuTUV involved in hemin import. Responsible for energy coupling to the transport system. This is Hemin import ATP-binding protein HmuV from Bordetella bronchiseptica (strain ATCC BAA-588 / NCTC 13252 / RB50) (Alcaligenes bronchisepticus).